The sequence spans 355 residues: Guanine nucleotide-binding protein subunit beta-5a (355 aa).

A disordered region spans residues 1–23; that stretch reads MAAQEEPAQPGDSLATLKSESDT. 7 WD repeats span residues 63 to 102, 105 to 144, 153 to 194, 195 to 238, 239 to 278, 280 to 322, and 325 to 355; these read GHGN…KEHA, MPCT…NENL, MHTN…QSFH, GHAA…QSFE, SHDS…EVAI, SKES…RVSI, and GHEN…RIWA.

The protein belongs to the WD repeat G protein beta family. May interact with RGS9; this interaction stabilizes both proteins and increases RGS9 GTPase-activating protein (GAP) activity, hence accelerating the deactivation of D(2) dopamine receptor-mediated signaling.

It localises to the membrane. Enhances GTPase-activating protein (GAP) activity of regulator of G protein signaling (RGS) proteins, such as RGS7 and RGS9, hence involved in the termination of the signaling initiated by the G protein coupled receptors (GPCRs) by accelerating the GTP hydrolysis on the G-alpha subunits, thereby promoting their inactivation. Increases RGS7 GTPase-activating protein (GAP) activity, thereby regulating mood and cognition. Increases RGS9 GTPase-activating protein (GAP) activity, hence contributes to the deactivation of G protein signaling initiated by D(2) dopamine receptors. Along with gnb5b, plays an important role in neuronal signaling, including in the parasympathetic, but not sympathetic, control of heart rate. This chain is Guanine nucleotide-binding protein subunit beta-5a, found in Danio rerio (Zebrafish).